The primary structure comprises 279 residues: uncharacterized protein (279 aa).

This is an uncharacterized protein from Borreliella burgdorferi (strain ATCC 35210 / DSM 4680 / CIP 102532 / B31) (Borrelia burgdorferi).